Reading from the N-terminus, the 381-residue chain is RING-H2 finger protein ATL1 (381 aa).

A disordered region spans residues 1–31 (MDLTDRRNPFNNLVFPPPPPPPSTTFTSPIF). The helical transmembrane segment at 46 to 66 (IAVIGILATAFLLVSYYIFVI) threads the bilayer. An RING-type; atypical zinc finger spans residues 134-176 (CSVCLNEFQEDEKLRIIPNCCHVFHIDCIDIWLQGNANCPLCR). Disordered regions lie at residues 249-269 (TSNE…PIKF) and 334-354 (RQIP…GNSR). Positions 250–261 (SNEVSTGNSPKS) are enriched in polar residues.

Belongs to the RING-type zinc finger family. ATL subfamily.

The protein resides in the membrane. It catalyses the reaction S-ubiquitinyl-[E2 ubiquitin-conjugating enzyme]-L-cysteine + [acceptor protein]-L-lysine = [E2 ubiquitin-conjugating enzyme]-L-cysteine + N(6)-ubiquitinyl-[acceptor protein]-L-lysine.. The protein operates within protein modification; protein ubiquitination. The chain is RING-H2 finger protein ATL1 (ATL1) from Arabidopsis thaliana (Mouse-ear cress).